The following is a 143-amino-acid chain: Nucleoside diphosphate kinase (143 aa).

6 residues coordinate ATP: K11, F59, R87, T93, R104, and N114. The Pros-phosphohistidine intermediate role is filled by H117.

The protein belongs to the NDK family. In terms of assembly, homotetramer. The cofactor is Mg(2+).

The protein localises to the cytoplasm. It carries out the reaction dZDP + ATP = dZTP + ADP. The catalysed reaction is a 2'-deoxyribonucleoside 5'-diphosphate + ATP = a 2'-deoxyribonucleoside 5'-triphosphate + ADP. The enzyme catalyses a ribonucleoside 5'-diphosphate + ATP = a ribonucleoside 5'-triphosphate + ADP. Its pathway is purine metabolism. In terms of biological role, major role in the synthesis of nucleoside triphosphates other than ATP. The ATP gamma phosphate is transferred to the NDP beta phosphate via a ping-pong mechanism, using a phosphorylated active-site intermediate. (Microbial infection) Catalyzes the phosphorylation of dZDP to dZTP, when the bacterium is infected by a phage that produces the substrate for the synthesis of dZTP (2- amino-2'-deoxyadenosine 5'-triphosphate), which is then used by the phage as a DNA polymerase substrate. This Salmonella paratyphi C (strain RKS4594) protein is Nucleoside diphosphate kinase.